Consider the following 246-residue polypeptide: tRNA pseudouridine synthase A (246 aa).

The active-site Nucleophile is the Asp-52. Tyr-111 provides a ligand contact to substrate.

Belongs to the tRNA pseudouridine synthase TruA family. Homodimer.

It catalyses the reaction uridine(38/39/40) in tRNA = pseudouridine(38/39/40) in tRNA. Its function is as follows. Formation of pseudouridine at positions 38, 39 and 40 in the anticodon stem and loop of transfer RNAs. This Parvibaculum lavamentivorans (strain DS-1 / DSM 13023 / NCIMB 13966) protein is tRNA pseudouridine synthase A.